Here is a 512-residue protein sequence, read N- to C-terminus: Maturase K (512 aa).

This sequence belongs to the intron maturase 2 family. MatK subfamily.

Its subcellular location is the plastid. It localises to the chloroplast. Functionally, usually encoded in the trnK tRNA gene intron. Probably assists in splicing its own and other chloroplast group II introns. The sequence is that of Maturase K from Acer platanoides (Norway maple).